The chain runs to 299 residues: Regucalcin (299 aa).

Glu-18 contacts a divalent metal cation. Substrate contacts are provided by Arg-101, Asn-103, and Glu-121. Residue Lys-144 is modified to N6-succinyllysine. A divalent metal cation is bound by residues Asn-154 and Asp-204. Asp-204 serves as the catalytic Proton donor/acceptor. N6-succinyllysine is present on residues Lys-244 and Lys-253.

It belongs to the SMP-30/CGR1 family. Monomer. Zn(2+) is required as a cofactor. Requires Mn(2+) as cofactor. Ca(2+) serves as cofactor. It depends on Mg(2+) as a cofactor.

It localises to the cytoplasm. The enzyme catalyses D-glucono-1,5-lactone + H2O = D-gluconate + H(+). In terms of biological role, gluconolactonase with low activity towards other sugar lactones, including gulonolactone and galactonolactone. Can also hydrolyze diisopropyl phosphorofluoridate and phenylacetate (in vitro). Calcium-binding protein. Modulates Ca(2+) signaling, and Ca(2+)-dependent cellular processes and enzyme activities. The polypeptide is Regucalcin (RGN) (Macaca fascicularis (Crab-eating macaque)).